Consider the following 403-residue polypeptide: 4-hydroxy-3-methylbut-2-en-1-yl diphosphate synthase (flavodoxin) (403 aa).

The span at 1-16 (MNTENPIEKPFRKTGD) shows a compositional bias: basic and acidic residues. The segment at 1–31 (MNTENPIEKPFRKTGDPVDLTSESPLHPRRK) is disordered. [4Fe-4S] cluster is bound by residues Cys-291, Cys-294, Cys-326, and Glu-333.

This sequence belongs to the IspG family. It depends on [4Fe-4S] cluster as a cofactor.

The enzyme catalyses (2E)-4-hydroxy-3-methylbut-2-enyl diphosphate + oxidized [flavodoxin] + H2O + 2 H(+) = 2-C-methyl-D-erythritol 2,4-cyclic diphosphate + reduced [flavodoxin]. Its pathway is isoprenoid biosynthesis; isopentenyl diphosphate biosynthesis via DXP pathway; isopentenyl diphosphate from 1-deoxy-D-xylulose 5-phosphate: step 5/6. In terms of biological role, converts 2C-methyl-D-erythritol 2,4-cyclodiphosphate (ME-2,4cPP) into 1-hydroxy-2-methyl-2-(E)-butenyl 4-diphosphate. The polypeptide is 4-hydroxy-3-methylbut-2-en-1-yl diphosphate synthase (flavodoxin) (Bifidobacterium longum (strain NCC 2705)).